Consider the following 935-residue polypeptide: Coiled-coil domain-containing protein 191 (935 aa).

4 coiled-coil regions span residues 189 to 324 (RLTM…ENQQ), 366 to 438 (YTRS…ALLK), 554 to 589 (RHVFQQQLIEKQKKKLQEQQKTILELKKNQRLAEAQ), and 660 to 740 (KAME…LEAI). Disordered stretches follow at residues 596 to 661 (SAVT…ILKA) and 678 to 715 (EKKKKQEEEKLAQLKAQEEERQKREAEEKEAQLERKRE).

The protein is Coiled-coil domain-containing protein 191 (CCDC191) of Macaca fascicularis (Crab-eating macaque).